The sequence spans 647 residues: NADP-dependent malic enzyme, chloroplastic (647 aa).

The N-terminal 61 residues, 1–61, are a transit peptide targeting the chloroplast; the sequence is MMSLNSSSVV…VDGAVKDVNA (61 aa). The active-site Proton donor is Y195. R248 contacts NAD(+). K266 (proton acceptor) is an active-site residue. A divalent metal cation-binding residues include E338, D339, and D362. Residue D362 participates in NAD(+) binding. 391-407 lines the NADP(+) pocket; that stretch reads LFLGAGEAGTGIAELIA. N503 is a binding site for NAD(+).

Belongs to the malic enzymes family. Homotetramer. Requires Mg(2+) as cofactor. The cofactor is Mn(2+).

Its subcellular location is the plastid. The protein localises to the chloroplast. It carries out the reaction (S)-malate + NADP(+) = pyruvate + CO2 + NADPH. It catalyses the reaction oxaloacetate + H(+) = pyruvate + CO2. The protein operates within photosynthesis; C3 acid pathway. The chloroplastic ME isoform decarboxylates malate shuttled from neighboring mesophyll cells. The CO(2) released is then refixed by ribulose-bisphosphate carboxylase. This pathway eliminates the photorespiratory loss of CO(2) that occurs in most plants. This Flaveria pringlei protein is NADP-dependent malic enzyme, chloroplastic (MODA).